Here is a 571-residue protein sequence, read N- to C-terminus: MKDSRGKRRCLAFLKGLRLKTDPNLPGAKQKTPFNISRFWLLVIIVIYTATSACIYFDWSAIRNLLLTVGKYKHLNVGDYPDITLSPQYKRINSLYPITLAIHFTMSVFCGFLYDHIGPKFTAIIGQMCNIMSWVFLSIDSTTVDTTFLSFVFLGLGADTAFIPILTISNLYPDASTFILTVVGAAASLSYAVPATLNFICRRYPSTPFPYICYGYIFLILVPCLLVATFLLPLMPFKGLDYYIERDQSRRSGAEGDAHRGRRGDPKMVTSQTNDEVDVEMQPFENAQSEASKGRSGNGSNTPSTRGNTPNGGKQTRGKTTSESNRSSKGEGSAIQGVEEEDQATNSSKGVNEEDSDFHRKSISLFFKVLLSYPSICIIVYFILFNISTVFYGMVTDTYFSYDRSIINIINILMPISCIPCIIFGRFINRYGSAIIIILMNAFSALMHLTALIKHRAAGLVSAFLYMCVTSIYTSQIYCFIQNSFPSVVFGKLLGFASLCGGLFSLLCEKLYDQIVSKDGASIDPTNVVLLLVIAFILMFLPLTVLYFRKYERSIEDLHQEVAMSQSSGRA.

N-linked (GlcNAc...) asparagine glycosylation occurs at Asn-35. A run of 6 helical transmembrane segments spans residues 39 to 59, 94 to 114, 117 to 137, 148 to 168, 177 to 197, and 217 to 237; these read FWLLVIIVIYTATSACIYFDW, SLYPITLAIHFTMSVFCGFLY, IGPKFTAIIGQMCNIMSWVFL, FLSFVFLGLGADTAFIPILTI, TFILTVVGAAASLSYAVPATL, and IFLILVPCLLVATFLLPLMPF. 3 N-linked (GlcNAc...) asparagine glycosylation sites follow: Asn-298, Asn-325, and Asn-346. A helical membrane pass occupies residues 365 to 385; the sequence is LFFKVLLSYPSICIIVYFILF. Residue Asn-386 is glycosylated (N-linked (GlcNAc...) asparagine). Transmembrane regions (helical) follow at residues 405–425, 433–453, 461–481, 488–508, and 528–548; these read SIINIINILMPISCIPCIIFG, SAIIIILMNAFSALMHLTALI, VSAFLYMCVTSIYTSQIYCFI, VVFGKLLGFASLCGGLFSLLC, and VVLLLVIAFILMFLPLTVLYF.

This sequence belongs to the SLC43A transporter (TC 2.A.1.44) family.

It is found in the membrane. It catalyses the reaction L-arginine(in) = L-arginine(out). Sodium-independent cationic amino acid transporter. Transports L-arginine, L-lysine, L-histidine and L-ornithine. In Plasmodium vivax (strain Salvador I), this protein is Cationic amino acid transporter 8.